A 323-amino-acid chain; its full sequence is Fructose-1,6-bisphosphatase class 1 (323 aa).

Mg(2+) contacts are provided by E84, D103, L105, and D106. Substrate-binding positions include 106–109 (DGSS), N198, and K264. Mg(2+) is bound at residue E270.

It belongs to the FBPase class 1 family. As to quaternary structure, homotetramer. Mg(2+) is required as a cofactor.

Its subcellular location is the cytoplasm. The enzyme catalyses beta-D-fructose 1,6-bisphosphate + H2O = beta-D-fructose 6-phosphate + phosphate. Its pathway is carbohydrate biosynthesis; gluconeogenesis. The sequence is that of Fructose-1,6-bisphosphatase class 1 from Hydrogenovibrio crunogenus (strain DSM 25203 / XCL-2) (Thiomicrospira crunogena).